The chain runs to 223 residues: Glutathione S-transferase A1 (223 aa).

Position 1 is an N-acetylmethionine (Met1). Ala2 is modified (N-acetylalanine; in Glutathione S-transferase A1, N-terminally processed). Positions 3 to 83 constitute a GST N-terminal domain; the sequence is GKPVLHYFNA…YIATKYDLYG (81 aa). Lys4 bears the N6-succinyllysine mark. Glutathione is bound by residues Tyr9, Lys45, 54-55, and 67-68; these read QV and QT. The GST C-terminal domain occupies 85-208; it reads DMKERALIDM…QPGSQRKPPM (124 aa).

The protein belongs to the GST superfamily. Alpha family. Homodimer. Expressed in the liver, skin and kidney.

The enzyme catalyses RX + glutathione = an S-substituted glutathione + a halide anion + H(+). The catalysed reaction is prostaglandin A2 + glutathione = prostaglandin A2-S-(R)-glutathione. It carries out the reaction prostaglandin J2 + glutathione = prostaglandin J2-S-(R)-glutathione. It catalyses the reaction (13S)-hydroperoxy-(9Z,11E)-octadecadienoate + 2 glutathione = (13S)-hydroxy-(9Z,11E)-octadecadienoate + glutathione disulfide + H2O. The enzyme catalyses androst-5-ene-3,17-dione = androst-4-ene-3,17-dione. In terms of biological role, glutathione S-transferase that catalyzes the nucleophilic attack of the sulfur atom of glutathione on the electrophilic groups of a wide range of exogenous and endogenous compounds. Involved in the formation of glutathione conjugates of both prostaglandin A2 (PGA2) and prostaglandin J2 (PGJ2). It also catalyzes the isomerization of D5-androstene-3,17-dione (AD) into D4-androstene-3,17-dione and may therefore play an important role in hormone biosynthesis. Through its glutathione-dependent peroxidase activity toward the fatty acid hydroperoxide (13S)-hydroperoxy-(9Z,11E)-octadecadienoate/13-HPODE it is also involved in the metabolism of oxidized linoleic acid. The chain is Glutathione S-transferase A1 (Gsta1) from Mus musculus (Mouse).